The following is a 123-amino-acid chain: uncharacterized protein (123 aa).

Disordered stretches follow at residues 1 to 21 and 82 to 123; these read MGAP…KLFK and EKTA…EDES.

This is an uncharacterized protein from Homo sapiens (Human).